We begin with the raw amino-acid sequence, 816 residues long: Fibroblast growth factor receptor 1 (816 aa).

A signal peptide spans 1–23 (MLSWRHLVFWAMLVMATLSAARP). Residues 24–374 (APTLPEQVSP…VIMTSPLYLE (351 aa)) are Extracellular-facing. Residues 25–118 (PTLPEQVSPK…ETTFFAVNVS (94 aa)) enclose the Ig-like C2-type 1 domain. Residues Cys54 and Cys100 are joined by a disulfide bond. 2 N-linked (GlcNAc...) asparagine glycosylation sites follow: Asn76 and Asn116. The tract at residues 118-152 (SDRIPSVEDDDDDDEKSSSEEKEAENSKPNPVAPF) is disordered. Over residues 133–143 (KSSSEEKEAEN) the composition is skewed to basic and acidic residues. Ig-like C2-type domains are found at residues 156–244 (PEKM…YQLD) and 253–355 (PILQ…AWLT). An intrachain disulfide couples Cys176 to Cys228. Asn238, Asn262, Asn294, Asn315, and Asn328 each carry an N-linked (GlcNAc...) asparagine glycan. Cys275 and Cys339 are disulfide-bonded. Residues 375-395 (IIIYCTGAFLISCMLVTVIIY) form a helical membrane-spanning segment. At 396–816 (KMKNTTKKTD…QHANGGLKKR (421 aa)) the chain is on the cytoplasmic side. Tyr459 is modified (phosphotyrosine; by autocatalysis). The Protein kinase domain occupies 474–763 (LILGKPLGEG…VAMTSNQEYL (290 aa)). ATP-binding positions include 480-486 (LGEGCFG), Lys510, 558-560 (EYA), and Asn564. 2 positions are modified to phosphotyrosine; by autocatalysis: Tyr579 and Tyr581. The active-site Proton acceptor is Asp619. ATP contacts are provided by Arg623 and Asp637. 4 positions are modified to phosphotyrosine; by autocatalysis: Tyr649, Tyr650, Tyr726, and Tyr762. The disordered stretch occupies residues 776–816 (FPDTRSSTCSSGEDSVFSHDPLPDEPCLPKYQHANGGLKKR). A compositionally biased stretch (polar residues) spans 779 to 788 (TRSSTCSSGE).

The protein belongs to the protein kinase superfamily. Tyr protein kinase family. Fibroblast growth factor receptor subfamily. In terms of assembly, monomer. Homodimer after ligand binding. Autophosphorylated. Binding of FGF family members together with heparan sulfate proteoglycan or heparin promotes receptor dimerization and autophosphorylation on tyrosine residues. Autophosphorylation occurs in trans between the two FGFR molecules present in the dimer and proceeds in a highly ordered manner. Phosphotyrosine residues provide docking sites for interacting proteins and so are crucial for FGFR1 function and its regulation. Post-translationally, ubiquitinated. FGFR1 is rapidly ubiquitinated after autophosphorylation, leading to internalization and degradation. In terms of processing, N-glycosylated in the endoplasmic reticulum. The N-glycan chains undergo further maturation to an Endo H-resistant form in the Golgi apparatus.

Its subcellular location is the cell membrane. It localises to the nucleus. The protein localises to the cytoplasm. It is found in the cytosol. The protein resides in the cytoplasmic vesicle. It carries out the reaction L-tyrosyl-[protein] + ATP = O-phospho-L-tyrosyl-[protein] + ADP + H(+). Its activity is regulated as follows. Present in an inactive conformation in the absence of bound ligand. Ligand binding leads to dimerization and activation by sequential autophosphorylation on tyrosine residues. In terms of biological role, tyrosine-protein kinase that acts as a cell-surface receptor for fibroblast growth factors and plays an essential role in the regulation of embryonic development, cell proliferation, differentiation and migration. Required for normal mesoderm patterning and normal skeletogenesis. Phosphorylates PLCG1, FRS2, GAB1 and SHB. Ligand binding leads to the activation of several signaling cascades. Activation of PLCG1 leads to the production of the cellular signaling molecules diacylglycerol and inositol-1,4,5-trisphosphate. Phosphorylation of FRS2 triggers recruitment of GRB2, GAB1, PIK3R1 and SOS1, and mediates activation of RAS, MAPK1/ERK2, MAPK3/ERK1 and the MAP kinase signaling pathway, as well as of the AKT1 signaling pathway. Promotes phosphorylation of SHC1, STAT1 and PTPN11/SHP2. In the nucleus, enhances RPS6KA1 and CREB1 activity and contributes to the regulation of transcription. FGFR1 signaling is down-regulated by ubiquitination, internalization and degradation. This is Fibroblast growth factor receptor 1 (FGFR1) from Pleurodeles waltl (Iberian ribbed newt).